The chain runs to 438 residues: Malic acid transport protein (438 aa).

10 consecutive transmembrane segments (helical) span residues 37-57 (SWFACTMATGGVGLIIGSFPF), 65-85 (IGKIVYILQIFLFSLFGSCML), 106-126 (LFIATCLLSISTFIDMLAIYA), 140-160 (ILYYIYVAVSFIYCVMAFFTI), 172-192 (SPAWILPIFPPMICGVIAGAV), 205-225 (VIFGILFQGLGFWVYLLLFAV), 242-262 (PGMFMFVGPPAFSGLALINIA), 288-308 (FMAIFIWGLAAWCYCLAMVSF), 321-341 (ACGWFAFIFPNVGFVNCTIEI), and 353-373 (FGHIIGVILCIQWILLMYLMV). A disordered region spans residues 390 to 438 (AHPPPKPNTGVLNPTFPPEKAPASLEKVDTHVTSTGGESDPPSSEHESV). 6 positions are modified to phosphoserine: serine 413, serine 423, serine 428, serine 432, serine 433, and serine 437.

The protein belongs to the tellurite-resistance/dicarboxylate transporter (TDT) family.

Its subcellular location is the membrane. Functionally, permease for malate and other C4 dicarboxylic acids. The protein is Malic acid transport protein (mae1) of Schizosaccharomyces pombe (strain 972 / ATCC 24843) (Fission yeast).